Consider the following 301-residue polypeptide: Recombination-associated protein RdgC (301 aa).

This sequence belongs to the RdgC family.

It localises to the cytoplasm. The protein localises to the nucleoid. May be involved in recombination. The polypeptide is Recombination-associated protein RdgC (Xanthomonas oryzae pv. oryzae (strain KACC10331 / KXO85)).